Consider the following 423-residue polypeptide: Histidine--tRNA ligase (423 aa).

The protein belongs to the class-II aminoacyl-tRNA synthetase family. As to quaternary structure, homodimer.

Its subcellular location is the cytoplasm. It catalyses the reaction tRNA(His) + L-histidine + ATP = L-histidyl-tRNA(His) + AMP + diphosphate + H(+). This is Histidine--tRNA ligase from Desulfosudis oleivorans (strain DSM 6200 / JCM 39069 / Hxd3) (Desulfococcus oleovorans).